Consider the following 224-residue polypeptide: Probable Brix domain-containing ribosomal biogenesis protein (224 aa).

One can recognise a Brix domain in the interval 1 to 196 (MMLITTSHRP…IWIMEDGRRW (196 aa)).

Its function is as follows. Probably involved in the biogenesis of the ribosome. In Pyrococcus abyssi (strain GE5 / Orsay), this protein is Probable Brix domain-containing ribosomal biogenesis protein.